The primary structure comprises 354 residues: UPF0283 membrane protein HI_0043 (354 aa).

A run of 3 helical transmembrane segments spans residues 57–77 (LLKF…VQWI), 87–107 (IYLA…KEII), and 211–231 (ESAV…FIAW).

It belongs to the UPF0283 family.

Its subcellular location is the cell inner membrane. The sequence is that of UPF0283 membrane protein HI_0043 from Haemophilus influenzae (strain ATCC 51907 / DSM 11121 / KW20 / Rd).